A 626-amino-acid chain; its full sequence is Beta-galactosidase large subunit (626 aa).

Glutamate 466 serves as the catalytic Proton donor. Glutamate 534 functions as the Nucleophile in the catalytic mechanism.

This sequence belongs to the glycosyl hydrolase 2 family. Heterodimer of a large (LacL) and a small subunit (LacM).

The enzyme catalyses Hydrolysis of terminal non-reducing beta-D-galactose residues in beta-D-galactosides.. Its function is as follows. Component of a beta-galactosidase that displays activity with the artificial chromogenic substrate o-nitrophenyl-beta-D-galactopyranoside (ONPG). In Leuconostoc lactis, this protein is Beta-galactosidase large subunit.